A 524-amino-acid chain; its full sequence is Rho guanine nucleotide exchange factor 3 (524 aa).

Phosphoserine occurs at positions 46 and 69. The DH domain occupies 121 to 303; the sequence is KRQEAIFELS…QGIVAEINTK (183 aa). Positions 290-448 constitute a PH domain; the sequence is INIIQGIVAE…WLNCIRQAKE (159 aa). The disordered stretch occupies residues 461 to 524; that stretch reads DSEGLVQGPG…CANSRPEESV (64 aa). Over residues 472 to 484 the composition is skewed to basic and acidic residues; it reads ENREPQGETKLEQ.

As to quaternary structure, interacts with RHOA and RHOB.

Its subcellular location is the cytoplasm. In terms of biological role, acts as a guanine nucleotide exchange factor (GEF) for RhoA and RhoB GTPases. In Mus musculus (Mouse), this protein is Rho guanine nucleotide exchange factor 3 (Arhgef3).